The sequence spans 202 residues: FMN-dependent NADH:quinone oxidoreductase 2 (202 aa).

FMN is bound by residues Ser-9, 15-17 (SAS), and 95-98 (MWNL).

It belongs to the azoreductase type 1 family. Homodimer. It depends on FMN as a cofactor.

It carries out the reaction 2 a quinone + NADH + H(+) = 2 a 1,4-benzosemiquinone + NAD(+). The enzyme catalyses N,N-dimethyl-1,4-phenylenediamine + anthranilate + 2 NAD(+) = 2-(4-dimethylaminophenyl)diazenylbenzoate + 2 NADH + 2 H(+). Functionally, quinone reductase that provides resistance to thiol-specific stress caused by electrophilic quinones. Its function is as follows. Also exhibits azoreductase activity. Catalyzes the reductive cleavage of the azo bond in aromatic azo compounds to the corresponding amines. The polypeptide is FMN-dependent NADH:quinone oxidoreductase 2 (Hahella chejuensis (strain KCTC 2396)).